Reading from the N-terminus, the 1147-residue chain is SR-related and CTD-associated factor 4 (1147 aa).

One can recognise a CID domain in the interval 1–139 (MDAVNAFNQE…PLLDMAAGTS (139 aa)). The residue at position 49 (Lys49) is an N6-acetyllysine. Disordered regions lie at residues 145–179 (AENV…AVPQ), 235–254 (KTTP…PEQK), 269–331 (DEPE…QQPA), and 424–502 (VKRH…KPET). At Ser154 the chain carries Phosphoserine. Low complexity-rich tracts occupy residues 283–292 (TAVTTTAPAA) and 299–310 (TATVPAAAAPAA). Positions 424-433 (VKRHMSDNRK) are enriched in basic and acidic residues. The span at 434 to 475 (SRSRSASRSPKRRRSRSGSRSRRSRHRRSRSRSRDRRRHSPR) shows a compositional bias: basic residues. Residues 477-492 (RSQERRDREKERERRQ) show a composition bias toward basic and acidic residues. The RRM domain maps to 508 to 582 (TTLWVGQLDK…KSIKIAWALN (75 aa)). 2 disordered regions span residues 629-661 (DWKG…IPKP) and 879-1147 (RPMP…EAPR). The residue at position 656 (Ser656) is a Phosphoserine. Over residues 879 to 913 (RPMPPHMMHRGPPPGPGGFAMPPPHGMKGPFPPHG) the composition is skewed to pro residues. Over residues 941-965 (QQPPQQPQQQPQPQAPQQPQQQQQQ) the composition is skewed to low complexity. Residues 966 to 977 (QPPPSQQPPPTQ) are compositionally biased toward pro residues. Ser1004 is modified (phosphoserine). Residues 1009 to 1085 (VENDRERYGN…RGKEKPEVTD (77 aa)) show a composition bias toward basic and acidic residues.

Interacts with POLR2A; via C-terminal heptapeptide repeat domain (CTD) phosphorylated at 'Ser-2' and 'Ser-5'.

It is found in the nucleus. Its function is as follows. Anti-terminator protein required to prevent early mRNA termination during transcription. Together with SCAF8, acts by suppressing the use of early, alternative poly(A) sites, thereby preventing the accumulation of non-functional truncated proteins. Mechanistically, associates with the phosphorylated C-terminal heptapeptide repeat domain (CTD) of the largest RNA polymerase II subunit (POLR2A), and subsequently binds nascent RNA upstream of early polyadenylation sites to prevent premature mRNA transcript cleavage and polyadenylation. Independently of SCAF8, also acts as a suppressor of transcriptional readthrough. The chain is SR-related and CTD-associated factor 4 from Homo sapiens (Human).